A 296-amino-acid polypeptide reads, in one-letter code: CTD kinase subunit gamma (296 aa).

Positions 25 to 44 (RDSITSSSTTTPPSSQQKLN) are disordered. Residues 29–39 (TSSSTTTPPSS) show a composition bias toward low complexity. T35 is subject to Phosphothreonine.

The protein belongs to the CTK3 family. As to quaternary structure, CTDK-I consists of three subunits, CTK1, CTK2 and CTK3 (also called alpha, beta and gamma). Interacts with CTK1. Heterodimerization with CTK2 is required to protect this subunit from degradation. Post-translationally, ubiquitinated. Ubiquitination leads to degradation by the 26S proteasome pathway.

The protein resides in the nucleus. The protein localises to the nucleolus. Its subcellular location is the cytoplasm. Functionally, gamma subunit of the CTDK-I complex, which hyperphosphorylates the C-terminal heptapeptide repeat domain (CTD) of the largest RNA polymerase II subunit. CTDK-I phosphorylates 'Ser-5' if the CTD substrate is not phosphorylated at 'Ser-5', but will phosphorylate 'Ser-2' of a CTD substrate if 'Ser-5' is already phosphorylated. CTDK-I is also more reactive toward substrates that are prephosphorylated at 'Ser-2' or 'Ser-5' compared with an unphosphorylated CTD substrate, therefore efficiently creating doubly phosphorylated CTD repeats. Involved in RNA polymerase I transcription and RNA polymerase II transcriptional elongation, and as part of the CTDK-I complex, pre-mRNA 3'-end processing and SET2 mediated H3K36 methylation. Together with CTK2, required for CTK1 CTD kinase activation. Required for DNA damage induced transcription. Involved in the adaptation to alternative carbon sources, including galactose, glycerol and ethanol, but not raffinose. Required for the integrity of the rDNA locus. This Saccharomyces cerevisiae (strain ATCC 204508 / S288c) (Baker's yeast) protein is CTD kinase subunit gamma (CTK3).